Reading from the N-terminus, the 822-residue chain is Fibroblast growth factor receptor 1 (822 aa).

The N-terminal stretch at 1–21 (MWGWKCLLFWAVLVTATLCTA) is a signal peptide. At 22–376 (RPAPTLPEQA…AVMTSPLYLE (355 aa)) the chain is on the extracellular side. The Ig-like C2-type 1 domain occupies 25–119 (PTLPEQAQPW…DTTYFSVNVS (95 aa)). A disulfide bridge links C55 with C101. N77 and N117 each carry an N-linked (GlcNAc...) asparagine glycan. Positions 120 to 162 (DALPSSEDDDDDDDSSSEEKETDNTKPNRRPVAPYWTSPEKME) are disordered. The segment covering 125–135 (SEDDDDDDDSS) has biased composition (acidic residues). Positions 136–145 (SEEKETDNTK) are enriched in basic and acidic residues. 2 consecutive Ig-like C2-type domains span residues 158-246 (PEKM…YQLD) and 255-357 (PILQ…AWLT). Residues 160–177 (KMEKKLHAVPAAKTVKFK) are heparin-binding. Cysteines 178 and 230 form a disulfide. N227, N240, N264, N296, N317, and N330 each carry an N-linked (GlcNAc...) asparagine glycan. C277 and C341 are joined by a disulfide. Residues 377–397 (IIIYCTGAFLISCMLGSVIIY) form a helical membrane-spanning segment. The Cytoplasmic portion of the chain corresponds to 398–822 (KMKSGTKKSD…QLANSGLKRR (425 aa)). Y463 carries the phosphotyrosine; by autocatalysis modification. The region spanning 478–767 (LVLGKPLGEG…VALTSNQEYL (290 aa)) is the Protein kinase domain. Residues 484-490 (LGEGCFG), K514, 562-564 (EYA), and N568 contribute to the ATP site. Phosphotyrosine; by autocatalysis is present on residues Y583 and Y585. D623 functions as the Proton acceptor in the catalytic mechanism. 2 residues coordinate ATP: R627 and D641. Phosphotyrosine; by autocatalysis is present on residues Y653, Y654, Y730, and Y766. Polar residues predominate over residues 782–792 (DTRSSTCSSGE). The disordered stretch occupies residues 782 to 822 (DTRSSTCSSGEDSVFSHEPLPEEPCLPRHPTQLANSGLKRR).

It belongs to the protein kinase superfamily. Tyr protein kinase family. Fibroblast growth factor receptor subfamily. As to quaternary structure, monomer. Homodimer after ligand binding. Interacts predominantly with FGF1 and FGF2, but can also interact with FGF3, FGF4, FGF5, FGF6, FGF8, FGF10, FGF19, FGF21, FGF22 and FGF23 (in vitro). Ligand specificity is determined by tissue-specific expression of isoforms, and differences in the third Ig-like domain are crucial for ligand specificity. Affinity for fibroblast growth factors (FGFs) is increased by heparan sulfate glycosaminoglycans that function as coreceptors. Likewise, KLB increases the affinity for FGF19, FGF21 and FGF23. Interacts (phosphorylated on Tyr-766) with PLCG1 (via SH2 domains). Interacts with FRS2. Interacts with RPS6KA1. Interacts (via C-terminus) with NEDD4 (via WW3 domain). Interacts with KL. Interacts with SHB (via SH2 domain). Interacts with GRB10. Interacts with ANOS1; this interaction does not interfere with FGF2-binding to FGFR1, but prevents binding of heparin-bound FGF2. Interacts with SOX2 and SOX3. Interacts with FLRT1, FLRT2 and FLRT3. Found in a ternary complex with FGF1 and ITGAV:ITGB3. Post-translationally, autophosphorylated. Binding of FGF family members together with heparan sulfate proteoglycan or heparin promotes receptor dimerization and autophosphorylation on tyrosine residues. Autophosphorylation occurs in trans between the two FGFR molecules present in the dimer and proceeds in a highly ordered manner. Initial autophosphorylation at Tyr-653 increases the kinase activity by a factor of 50 to 100. After this, Tyr-583 becomes phosphorylated, followed by phosphorylation of Tyr-463, Tyr-766, Tyr-583 and Tyr-585. In a third stage, Tyr-654 is autophosphorylated, resulting in a further tenfold increase of kinase activity. Phosphotyrosine residues provide docking sites for interacting proteins and so are crucial for FGFR1 function and its regulation. In terms of processing, ubiquitinated. FGFR1 is rapidly ubiquitinated by NEDD4 after autophosphorylation, leading to internalization and lysosomal degradation. CBL is recruited to activated FGFR1 via FRS2 and GRB2, and mediates ubiquitination and subsequent degradation of FGFR1. N-glycosylated in the endoplasmic reticulum. The N-glycan chains undergo further maturation to an Endo H-resistant form in the Golgi apparatus. As to expression, widely expressed.

Its subcellular location is the cell membrane. The protein localises to the nucleus. It is found in the cytoplasm. The protein resides in the cytosol. It localises to the cytoplasmic vesicle. It catalyses the reaction L-tyrosyl-[protein] + ATP = O-phospho-L-tyrosyl-[protein] + ADP + H(+). Present in an inactive conformation in the absence of bound ligand. Ligand binding leads to dimerization and activation by sequential autophosphorylation on tyrosine residues. Tyrosine-protein kinase that acts as a cell-surface receptor for fibroblast growth factors and plays an essential role in the regulation of embryonic development, cell proliferation, differentiation and migration. Required for normal mesoderm patterning and correct axial organization during embryonic development, normal skeletogenesis and normal development of the gonadotropin-releasing hormone (GnRH) neuronal system. Phosphorylates PLCG1, FRS2, GAB1 and SHB. Ligand binding leads to the activation of several signaling cascades. Activation of PLCG1 leads to the production of the cellular signaling molecules diacylglycerol and inositol 1,4,5-trisphosphate. Phosphorylation of FRS2 triggers recruitment of GRB2, GAB1, PIK3R1 and SOS1, and mediates activation of RAS, MAPK1/ERK2, MAPK3/ERK1 and the MAP kinase signaling pathway, as well as of the AKT1 signaling pathway. Promotes phosphorylation of SHC1, STAT1 and PTPN11/SHP2. In the nucleus, enhances RPS6KA1 and CREB1 activity and contributes to the regulation of transcription. FGFR1 signaling is down-regulated by IL17RD/SEF, and by FGFR1 ubiquitination, internalization and degradation. The chain is Fibroblast growth factor receptor 1 (Fgfr1) from Mus musculus (Mouse).